The sequence spans 29 residues: Cuticle protein 36 (29 aa).

Component of the cuticle of migratory locust which contains more than 100 different structural proteins. The sequence is that of Cuticle protein 36 from Locusta migratoria (Migratory locust).